The following is a 308-amino-acid chain: Oxygen-dependent coproporphyrinogen-III oxidase (308 aa).

Residue Ser-100 coordinates substrate. A divalent metal cation is bound by residues His-104 and His-114. Residue His-114 is the Proton donor of the active site. 116 to 118 (NFR) contributes to the substrate binding site. His-153 and His-183 together coordinate a divalent metal cation. Residues 248-283 (YVEFNLVFDRGTIFGLQSGGRTESILSSMPPMATWK) form an important for dimerization region. Residue 266-268 (GGR) coordinates substrate.

It belongs to the aerobic coproporphyrinogen-III oxidase family. In terms of assembly, homodimer. A divalent metal cation serves as cofactor.

The protein resides in the cytoplasm. It carries out the reaction coproporphyrinogen III + O2 + 2 H(+) = protoporphyrinogen IX + 2 CO2 + 2 H2O. It functions in the pathway porphyrin-containing compound metabolism; protoporphyrin-IX biosynthesis; protoporphyrinogen-IX from coproporphyrinogen-III (O2 route): step 1/1. In terms of biological role, involved in the heme biosynthesis. Catalyzes the aerobic oxidative decarboxylation of propionate groups of rings A and B of coproporphyrinogen-III to yield the vinyl groups in protoporphyrinogen-IX. The polypeptide is Oxygen-dependent coproporphyrinogen-III oxidase (Francisella tularensis subsp. holarctica (strain FTNF002-00 / FTA)).